A 192-amino-acid chain; its full sequence is Lipid A acyltransferase PagP (192 aa).

Positions 1–24 (MWLRFCAPALMAWYWVFFPSTSQA) are cleaved as a signal peptide. Catalysis depends on residues histidine 63, aspartate 106, and serine 107.

Belongs to the lipid A palmitoyltransferase family. Homodimer.

Its subcellular location is the cell outer membrane. The enzyme catalyses a lipid A + a 1,2-diacyl-sn-glycero-3-phosphocholine = a hepta-acyl lipid A + a 2-acyl-sn-glycero-3-phosphocholine. The catalysed reaction is a lipid IVA + a 1,2-diacyl-sn-glycero-3-phosphocholine = a lipid IVB + a 2-acyl-sn-glycero-3-phosphocholine. It catalyses the reaction a lipid IIA + a 1,2-diacyl-sn-glycero-3-phosphocholine = a lipid IIB + a 2-acyl-sn-glycero-3-phosphocholine. In terms of biological role, transfers a fatty acid residue from the sn-1 position of a phospholipid to the N-linked hydroxyfatty acid chain on the proximal unit of lipid A or its precursors. This Musicola paradisiaca (strain Ech703) (Dickeya paradisiaca) protein is Lipid A acyltransferase PagP.